The chain runs to 406 residues: MKQTVWNHLKLCPQGDPAQTIDDAAIAVENGRIVWLGAVRELPAQYAAWPREDLGGAWVTPGLVDCHTHLVYGGQRADEFAQRLAGVSYEEIAKQGGGIVSTVRATRAADEASLFAQSAARLEAMLAEGVTAIEIKSGYGLDLQSERKMLRVARQLGERYPVKVYTTFLGAHALPPEFASRADDYIDEVCEGMLPALADEGLVDAVDVFCERIGFSLEQSERVFNAAARHGLPVKMHAEQLSNAGGTALAARYGALSADHLEFLDEAGVAAMKEAGTVAVLLPGAYYFIRETQLPPVELLRRYGVPIAISTDSNPGTSPATSLPLMMNMATTLFRMTVPEVLRGVTCHAAQALGKADTHGTLAVGRAADFAVWSVQSLAELAYWIGRPLCERVVRGGETVHLRHAR.

The Fe(3+) site is built by histidine 67 and histidine 69. Residues histidine 67 and histidine 69 each contribute to the Zn(2+) site. The 4-imidazolone-5-propanoate site is built by arginine 76, tyrosine 139, and histidine 172. Position 139 (tyrosine 139) interacts with N-formimidoyl-L-glutamate. Histidine 237 is a binding site for Fe(3+). Histidine 237 is a Zn(2+) binding site. 4-imidazolone-5-propanoate is bound at residue glutamine 240. Aspartate 312 lines the Fe(3+) pocket. Position 312 (aspartate 312) interacts with Zn(2+). 2 residues coordinate N-formimidoyl-L-glutamate: asparagine 314 and glycine 316. Threonine 317 contacts 4-imidazolone-5-propanoate.

It belongs to the metallo-dependent hydrolases superfamily. HutI family. The cofactor is Zn(2+). Fe(3+) serves as cofactor.

The protein resides in the cytoplasm. The catalysed reaction is 4-imidazolone-5-propanoate + H2O = N-formimidoyl-L-glutamate. It participates in amino-acid degradation; L-histidine degradation into L-glutamate; N-formimidoyl-L-glutamate from L-histidine: step 3/3. Catalyzes the hydrolytic cleavage of the carbon-nitrogen bond in imidazolone-5-propanoate to yield N-formimidoyl-L-glutamate. It is the third step in the universal histidine degradation pathway. This chain is Imidazolonepropionase, found in Paraburkholderia phymatum (strain DSM 17167 / CIP 108236 / LMG 21445 / STM815) (Burkholderia phymatum).